Reading from the N-terminus, the 131-residue chain is MDKKTIYFICTGNSCRSQMAEGWGKEILGEDWNVYSAGIETHGVNPRAIEAMKEVDIDISNHTSDLIDNDILKQSDLVVTLCSDADDNCPILPPNVKKEHWGFEDPAGKEWSEFQRVRDEIKLAIEKFKLR.

Residues C10, C82, and C89 each act as nucleophile in the active site. 2 disulfide bridges follow: C10/C82 and C82/C89.

This sequence belongs to the low molecular weight phosphotyrosine protein phosphatase family. Thioredoxin-coupled ArsC subfamily.

The protein localises to the cytoplasm. The catalysed reaction is arsenate + [thioredoxin]-dithiol + H(+) = arsenite + [thioredoxin]-disulfide + H2O. Functionally, catalyzes the reduction of arsenate [As(V)] to arsenite [As(III)]. The protein is Arsenate reductase 1 of Staphylococcus saprophyticus subsp. saprophyticus (strain ATCC 15305 / DSM 20229 / NCIMB 8711 / NCTC 7292 / S-41).